The sequence spans 148 residues: Aspartate carbamoyltransferase regulatory chain (148 aa).

4 residues coordinate Zn(2+): C106, C111, C134, and C137.

Belongs to the PyrI family. As to quaternary structure, contains catalytic and regulatory chains. The cofactor is Zn(2+).

Functionally, involved in allosteric regulation of aspartate carbamoyltransferase. This Methanococcus maripaludis (strain DSM 14266 / JCM 13030 / NBRC 101832 / S2 / LL) protein is Aspartate carbamoyltransferase regulatory chain.